Here is a 194-residue protein sequence, read N- to C-terminus: Ribonuclease VapC1 (194 aa).

Residues 34–134 enclose the PINc domain; the sequence is YVIDTSAIIS…TDDYSIQNVA (101 aa). 2 residues coordinate Mg(2+): D37 and D150.

The protein belongs to the PINc/VapC protein family. Mg(2+) is required as a cofactor.

In terms of biological role, toxic component of a type II toxin-antitoxin (TA) system. An RNase. The sequence is that of Ribonuclease VapC1 from Thermoplasma acidophilum (strain ATCC 25905 / DSM 1728 / JCM 9062 / NBRC 15155 / AMRC-C165).